The primary structure comprises 238 residues: Enolase-phosphatase E1 (238 aa).

Mg(2+) is bound by residues Asp-14 and Glu-16. Substrate-binding positions include 128 to 129 (SS) and Lys-165. Residue Asp-192 participates in Mg(2+) binding.

This sequence belongs to the HAD-like hydrolase superfamily. MasA/MtnC family. Monomer. Requires Mg(2+) as cofactor.

The protein resides in the cytoplasm. It localises to the nucleus. The catalysed reaction is 5-methylsulfanyl-2,3-dioxopentyl phosphate + H2O = 1,2-dihydroxy-5-(methylsulfanyl)pent-1-en-3-one + phosphate. It participates in amino-acid biosynthesis; L-methionine biosynthesis via salvage pathway; L-methionine from S-methyl-5-thio-alpha-D-ribose 1-phosphate: step 3/6. It functions in the pathway amino-acid biosynthesis; L-methionine biosynthesis via salvage pathway; L-methionine from S-methyl-5-thio-alpha-D-ribose 1-phosphate: step 4/6. In terms of biological role, bifunctional enzyme that catalyzes the enolization of 2,3-diketo-5-methylthiopentyl-1-phosphate (DK-MTP-1-P) into the intermediate 2-hydroxy-3-keto-5-methylthiopentenyl-1-phosphate (HK-MTPenyl-1-P), which is then dephosphorylated to form the acireductone 1,2-dihydroxy-3-keto-5-methylthiopentene (DHK-MTPene). The sequence is that of Enolase-phosphatase E1 from Fusarium vanettenii (strain ATCC MYA-4622 / CBS 123669 / FGSC 9596 / NRRL 45880 / 77-13-4) (Fusarium solani subsp. pisi).